The chain runs to 311 residues: MGHNHNEGANKKVLLISFIMITGYMIIEAIGGFLTNSLALLSDAGHMLSDSISLMVALIAFTLAEKKANHNKTFGYKRFEILAAVINGAALILISLYIIYEAIERFSNPPKVATTGMLTISIIGLVVNLLVAWIMMSGGDTKNNLNIRGAYLHVISDMLGSVGAILAAILIIFFGWGWADPLASIIVAILVLRSGYNVTKDSIHILMEGTPENIDVSDIIRTIEGTEGIQNIHDLHIWSITSGLNALSCHAVVDDQLTISESENILRKIEHELEHKGITHVTIQMETEAHNHDNAILCQPKMEKQRDHHHH.

The Extracellular portion of the chain corresponds to 1 to 12; sequence MGHNHNEGANKK. A helical membrane pass occupies residues 13–33; it reads VLLISFIMITGYMIIEAIGGF. The Cytoplasmic portion of the chain corresponds to 34–43; the sequence is LTNSLALLSD. Residues 44–64 traverse the membrane as a helical segment; the sequence is AGHMLSDSISLMVALIAFTLA. At 65 to 78 the chain is on the extracellular side; that stretch reads EKKANHNKTFGYKR. Residues 79 to 99 traverse the membrane as a helical segment; that stretch reads FEILAAVINGAALILISLYII. The Cytoplasmic portion of the chain corresponds to 100-115; the sequence is YEAIERFSNPPKVATT. Residues 116-136 traverse the membrane as a helical segment; the sequence is GMLTISIIGLVVNLLVAWIMM. Residues 137-157 are Extracellular-facing; it reads SGGDTKNNLNIRGAYLHVISD. A helical membrane pass occupies residues 158–178; sequence MLGSVGAILAAILIIFFGWGW. Residues 179–311 lie on the Cytoplasmic side of the membrane; that stretch reads ADPLASIIVA…MEKQRDHHHH (133 aa).

It belongs to the cation diffusion facilitator (CDF) transporter (TC 2.A.4) family. SLC30A subfamily.

The protein resides in the cell membrane. In terms of biological role, involved in divalent cation and potassium homeostasis in the cell. Catalyzes the active efflux of zinc, cadmium and cobalt, in exchange for potassium and H(+) ions. This Bacillus subtilis (strain 168) protein is Cadmium, cobalt and zinc/H(+)-K(+) antiporter (czcD).